The chain runs to 149 residues: Large ribosomal subunit protein bL9 (149 aa).

It belongs to the bacterial ribosomal protein bL9 family.

Its function is as follows. Binds to the 23S rRNA. The chain is Large ribosomal subunit protein bL9 from Bacillus velezensis (strain DSM 23117 / BGSC 10A6 / LMG 26770 / FZB42) (Bacillus amyloliquefaciens subsp. plantarum).